Reading from the N-terminus, the 1321-residue chain is Bile salt export pump (1321 aa).

Residues 1–62 (MSDSVILRSI…FSSSTDIWLM (62 aa)) are Cytoplasmic-facing. The disordered stretch occupies residues 16-37 (ENDGFESDKSYNNDKKSRLQDE). Basic and acidic residues predominate over residues 21–37 (ESDKSYNNDKKSRLQDE). The ABC transmembrane type-1 1 domain occupies 62 to 385 (MFVGSLCAFL…ASPCLEAFAT (324 aa)). The chain crosses the membrane as a helical span at residues 63–83 (FVGSLCAFLHGIAQPGVLLIF). Residues 84 to 147 (GTMTDVFIDY…MIKFASYYAG (64 aa)) lie on the Extracellular side of the membrane. N109, N116, N122, and N125 each carry an N-linked (GlcNAc...) asparagine glycan. A helical membrane pass occupies residues 148–168 (IAVAVLITGYIQICFWVIAAA). Residues 169–215 (RQIQKMRKFYFRRIMRMEIGWFDCNSVGELNTRFSDDINKINDAIAD) are Cytoplasmic-facing. A helical transmembrane segment spans residues 216–236 (QMALFIQRMTSTICGFLLGFF). At 237-240 (RGWK) the chain is on the extracellular side. Residues 241-261 (LTLVIISVSPLIGIGAATIGL) traverse the membrane as a helical segment. Residues 262–319 (SVSKFTDYELKAYAKAGVVADEVISSMRTVAAFGGEKREVERYEKNLVFAQRWGIRKG) lie on the Cytoplasmic side of the membrane. The chain crosses the membrane as a helical span at residues 320–340 (IVMGFFTGFVWCLIFLCYALA). At 341–353 (FWYGSTLVLDEGE) the chain is on the extracellular side. Residues 354–374 (YTPGTLVQIFLSVIVGALNLG) form a helical membrane-spanning segment. At 375–755 (NASPCLEAFA…KFSAPEWPYM (381 aa)) the chain is on the cytoplasmic side. The region spanning 420–656 (IEFHNVTFHY…KGVYFTLVTL (237 aa)) is the ABC transporter 1 domain. Position 455-462 (455-462 (GPSGAGKS)) interacts with ATP. Phosphothreonine is present on T586. S587 is subject to Phosphoserine. An interaction with HAX1 region spans residues 651–672 (FTLVTLQSQGNQALNEEDIKDA). Residues S690, S701, and S704 each carry the phosphoserine modification. Residues 755-1043 (MLVGSVGAAV…AFSYTPSYAK (289 aa)) enclose the ABC transmembrane type-1 2 domain. Residues 756–776 (LVGSVGAAVNGTVTPLYAFLF) traverse the membrane as a helical segment. The Extracellular segment spans residues 777–794 (SQILGTFSIPDKEEQRSQ). The helical transmembrane segment at 795–815 (INGVCLLFVAMGCVSLFTQFL) threads the bilayer. Residues 816–869 (QGYAFAKSGELLTKRLRKFGFRAMLGQDIAWFDDLRNSPGALTTRLATDASQVQ) are Cytoplasmic-facing. A run of 2 helical transmembrane segments spans residues 870-890 (GAAGSQIGMIVNSFTNVTVAM) and 891-911 (IIAFSFSWKLSLVILCFFPFL). The Cytoplasmic segment spans residues 912 to 979 (ALSGATQTRM…PFKTAIQKAN (68 aa)). The chain crosses the membrane as a helical span at residues 980–1000 (IYGFCFAFAQCIMFIANSASY). At 1001 to 1011 (RYGGYLISNEG) the chain is on the extracellular side. The helical transmembrane segment at 1012–1032 (LHFSYVFRVISAVVLSATALG) threads the bilayer. At 1033 to 1321 (RAFSYTPSYA…KLVTTGSPIS (289 aa)) the chain is on the cytoplasmic side. An ABC transporter 2 domain is found at 1078–1316 (IDFVDCKFTY…KGAYYKLVTT (239 aa)). An ATP-binding site is contributed by 1113–1120 (GSSGCGKS). S1214 bears the Phosphoserine mark. The segment at 1311 to 1314 (YKLV) is mediates internalization from the plasma membrane. S1321 is modified (phosphoserine).

It belongs to the ABC transporter superfamily. ABCB family. Multidrug resistance exporter (TC 3.A.1.201) subfamily. As to quaternary structure, interacts with HAX1. Interacts with the adapter protein complex 2 (AP-2) throught AP2A2 or AP2A1; this interaction regulates cell membrane expression of ABCB11 through its internalization in a clathrin-dependent manner and its subsequent degradation. N-glycosylated. Post-translationally, ubiquitinated; short-chain ubiquitination regulates cell-Surface expression of ABCB11. Expressed predominantly, if not exclusively in the liver, where it was further localized to the canalicular microvilli and to subcanalicular vesicles of the hepatocytes by in situ.

Its subcellular location is the apical cell membrane. The protein localises to the recycling endosome membrane. It localises to the endosome. The protein resides in the cell membrane. It carries out the reaction cholate(in) + ATP + H2O = cholate(out) + ADP + phosphate + H(+). It catalyses the reaction taurocholate(in) + ATP + H2O = taurocholate(out) + ADP + phosphate + H(+). The enzyme catalyses glycocholate(in) + ATP + H2O = glycocholate(out) + ADP + phosphate + H(+). The catalysed reaction is glycochenodeoxycholate(in) + ATP + H2O = glycochenodeoxycholate(out) + ADP + phosphate + H(+). It carries out the reaction taurochenodeoxycholate(in) + ATP + H2O = taurochenodeoxycholate(out) + ADP + phosphate + H(+). It catalyses the reaction glycoursodeoxycholate(in) + ATP + H2O = glycoursodeoxycholate(out) + ADP + phosphate + H(+). The enzyme catalyses tauroursodeoxycholate(in) + ATP + H2O = tauroursodeoxycholate(out) + ADP + phosphate + H(+). The catalysed reaction is taurodeoxycholate(in) + ATP + H2O = taurodeoxycholate(out) + ADP + phosphate + H(+). It carries out the reaction taurolithocholate 3-sulfate(in) + ATP + H2O = taurolithocholate 3-sulfate(out) + ADP + phosphate + H(+). It catalyses the reaction pravastatin(in) + ATP + H2O = pravastatin(out) + ADP + phosphate + H(+). The uptake of taurocholate is inhibited by taurolithocholate sulfate with an IC(50) of 9 uM. Pravastatin competitively inhibits the transport of taurocholic acid. Cyclosporin A, glibenclamide, rifampicin and troglitazonestrongly competitively inhibit the transport activity of taurocholate. The canalicular transport activity of taurocholate is strongly dependent on canalicular membrane cholesterol content. The uptake of taurocholate is increased by short- and medium-chain fatty acids. Cholesterol increases transport capacity of taurocholate without affecting the affinity for the substrate. Catalyzes the transport of the major hydrophobic bile salts, such as taurine and glycine-conjugated cholic acid across the canalicular membrane of hepatocytes in an ATP-dependent manner, therefore participates in hepatic bile acid homeostasis and consequently to lipid homeostasis through regulation of biliary lipid secretion in a bile salts dependent manner. Transports taurine-conjugated bile salts more rapidly than glycine-conjugated bile salts. Also transports non-bile acid compounds, such as pravastatin and fexofenadine in an ATP-dependent manner and may be involved in their biliary excretion. The protein is Bile salt export pump of Homo sapiens (Human).